The following is a 298-amino-acid chain: Ketohexokinase (298 aa).

Residues Asp-15, Gly-41, Asn-42, and Asn-45 each coordinate beta-D-fructose. ATP is bound by residues Arg-108, 226 to 229 (AEEG), and 255 to 258 (GAGD). Asp-258 provides a ligand contact to beta-D-fructose.

Belongs to the carbohydrate kinase PfkB family. Homodimer. As to expression, most abundant in liver, kidney, gut, spleen and pancreas. Low levels also found in adrenal, muscle, brain and eye.

It carries out the reaction beta-D-fructose + ATP = beta-D-fructose 1-phosphate + ADP + H(+). Its pathway is carbohydrate metabolism; fructose metabolism. With respect to regulation, requires potassium. Inhibition by ADP. Its function is as follows. Catalyzes the phosphorylation of the ketose sugar fructose to fructose-1-phosphate. The chain is Ketohexokinase from Homo sapiens (Human).